The following is a 91-amino-acid chain: Large ribosomal subunit protein uL23 (91 aa).

This sequence belongs to the universal ribosomal protein uL23 family. In terms of assembly, part of the 50S ribosomal subunit. Contacts protein L29, and trigger factor when it is bound to the ribosome.

One of the early assembly proteins it binds 23S rRNA. One of the proteins that surrounds the polypeptide exit tunnel on the outside of the ribosome. Forms the main docking site for trigger factor binding to the ribosome. In Staphylococcus aureus (strain USA300), this protein is Large ribosomal subunit protein uL23.